The chain runs to 176 residues: Peptide deformylase 1 (176 aa).

Fe cation contacts are provided by Cys99 and His141. Glu142 is an active-site residue. His145 is a Fe cation binding site.

This sequence belongs to the polypeptide deformylase family. Fe(2+) is required as a cofactor.

It carries out the reaction N-terminal N-formyl-L-methionyl-[peptide] + H2O = N-terminal L-methionyl-[peptide] + formate. Functionally, removes the formyl group from the N-terminal Met of newly synthesized proteins. Requires at least a dipeptide for an efficient rate of reaction. N-terminal L-methionine is a prerequisite for activity but the enzyme has broad specificity at other positions. The chain is Peptide deformylase 1 from Nitrosomonas europaea (strain ATCC 19718 / CIP 103999 / KCTC 2705 / NBRC 14298).